The sequence spans 141 residues: Galactose-6-phosphate isomerase subunit LacA (141 aa).

The protein belongs to the LacAB/RpiB family. Heteromultimeric protein consisting of LacA and LacB.

It catalyses the reaction aldehydo-D-galactose 6-phosphate = keto-D-tagatose 6-phosphate. It functions in the pathway carbohydrate metabolism; D-galactose 6-phosphate degradation; D-tagatose 6-phosphate from D-galactose 6-phosphate: step 1/1. The sequence is that of Galactose-6-phosphate isomerase subunit LacA from Streptococcus pneumoniae serotype 2 (strain D39 / NCTC 7466).